Reading from the N-terminus, the 167-residue chain is Cofilin-2 (167 aa).

In terms of domain architecture, ADF-H spans 4 to 153; the sequence is GVTVNDEVIK…KDRCTLADKL (150 aa). The Nuclear localization signal motif lies at 30–34; the sequence is KKRKK.

It belongs to the actin-binding proteins ADF family.

Its subcellular location is the nucleus matrix. The protein resides in the cytoplasm. It localises to the cytoskeleton. In terms of biological role, controls reversibly actin polymerization and depolymerization in a pH-sensitive manner. It has the ability to bind G- and F-actin in a 1:1 ratio of cofilin to actin. It is the major component of intranuclear and cytoplasmic actin rods. This chain is Cofilin-2 (cfl2), found in Xenopus tropicalis (Western clawed frog).